The primary structure comprises 347 residues: Melanoma-associated antigen B1 (347 aa).

Basic residues predominate over residues 1–17 (MPRGQKSKLRAREKRRK). Positions 1–104 (MPRGQKSKLR…QATTSTESSV (104 aa)) are disordered. Composition is skewed to polar residues over residues 39-53 (PSSS…TSSP) and 89-102 (ENAS…STES). In terms of domain architecture, MAGE spans 108 to 307 (VAWEAGMLMH…RDFPSHYEEA (200 aa)). A disordered region spans residues 315 to 347 (AQVRSSVRARRRTTATTFRARSRAPFSRSSHPM). A compositionally biased stretch (low complexity) spans 328–347 (TATTFRARSRAPFSRSSHPM).

In terms of tissue distribution, expressed only in testis.

This is Melanoma-associated antigen B1 (MAGEB1) from Homo sapiens (Human).